The chain runs to 261 residues: Mite allergen Eur m 3 (261 aa).

A signal peptide spans 1 to 18; that stretch reads MVICNAIIVLLLAFNTLA. The propeptide occupies 19–29; that stretch reads NPILPSSPNAT. Positions 30–260 constitute a Peptidase S1 domain; sequence IVGGQKAKAG…FIDWIDSKRS (231 aa). C54 and C70 are oxidised to a cystine. Residues H69 and D114 each act as charge relay system in the active site. 2 disulfide bridges follow: C181–C198 and C210–C236. The Charge relay system role is filled by S214.

This sequence belongs to the peptidase S1 family.

It is found in the secreted. In Euroglyphus maynei (Mayne's house dust mite), this protein is Mite allergen Eur m 3 (EURM3).